Reading from the N-terminus, the 129-residue chain is Small ribosomal subunit protein uS11 (129 aa).

A disordered region spans residues 108–129 (EDVTPIPHDGTKPKGGKRGRRV).

The protein belongs to the universal ribosomal protein uS11 family. In terms of assembly, part of the 30S ribosomal subunit.

In terms of biological role, located on the platform of the 30S subunit. The polypeptide is Small ribosomal subunit protein uS11 (Methanothrix thermoacetophila (strain DSM 6194 / JCM 14653 / NBRC 101360 / PT) (Methanosaeta thermophila)).